We begin with the raw amino-acid sequence, 232 residues long: MKLKIGIIGAMAQEIEILRKLMTDVSVLEIAGCKIYEGKINNTCVSLLQSGIGKVSAAMGTTLLLELTKPNMVINTGSAGGLAENLNVGDIVISTEVRHYDVDVTAFGYEIGQLPANPAAFLPNEQLVNMALKETKTAGVNAVAGLICSGDRFVNGAEQITTIRQHFDQVVAVEMEAAAIAQVCYAFEVPFVVVRAISDIADKCSHLSFEEFLPLAAEKSSEIVIAMLNNFS.

Glu-14 serves as the catalytic Proton acceptor. Substrate-binding positions include Gly-80, Val-154, and 175 to 176 (ME). Asp-199 serves as the catalytic Proton donor.

The protein belongs to the PNP/UDP phosphorylase family. MtnN subfamily.

The catalysed reaction is S-adenosyl-L-homocysteine + H2O = S-(5-deoxy-D-ribos-5-yl)-L-homocysteine + adenine. It carries out the reaction S-methyl-5'-thioadenosine + H2O = 5-(methylsulfanyl)-D-ribose + adenine. The enzyme catalyses 5'-deoxyadenosine + H2O = 5-deoxy-D-ribose + adenine. The protein operates within amino-acid biosynthesis; L-methionine biosynthesis via salvage pathway; S-methyl-5-thio-alpha-D-ribose 1-phosphate from S-methyl-5'-thioadenosine (hydrolase route): step 1/2. Functionally, catalyzes the irreversible cleavage of the glycosidic bond in both 5'-methylthioadenosine (MTA) and S-adenosylhomocysteine (SAH/AdoHcy) to adenine and the corresponding thioribose, 5'-methylthioribose and S-ribosylhomocysteine, respectively. Also cleaves 5'-deoxyadenosine, a toxic by-product of radical S-adenosylmethionine (SAM) enzymes, into 5-deoxyribose and adenine. In Haemophilus ducreyi (strain 35000HP / ATCC 700724), this protein is 5'-methylthioadenosine/S-adenosylhomocysteine nucleosidase.